The sequence spans 300 residues: MDNNEELEIVHTPVMLKEVLSFIPENAKIAVDATLGEGGHTKAMLDLNLEVHSFERDSAILEIAKKRLKNYDKFHYYNNTYDKMIEELDDSIIGNVDFMLYDLGVSLFHFKKAERGFSFKDNVRLDMRLGLNEKSAYDVINGYSEEELERVLRDYGEISNARKMANVIVKERNRRKIETSRELENIIFHNTDKSQRYGKIHPATLVFQAIRIEVNDELNILEKSISNIPSILKQNGVVVVMSYHSLEDRIIKKFFKENEKTKNKDGIFKLLNNKVKLPTNEEIKSNPASRSAKMRIAQKV.

Residues 38 to 40 (GGH), Glu-55, Ile-85, Asp-102, and His-109 each bind S-adenosyl-L-methionine.

Belongs to the methyltransferase superfamily. RsmH family.

Its subcellular location is the cytoplasm. It carries out the reaction cytidine(1402) in 16S rRNA + S-adenosyl-L-methionine = N(4)-methylcytidine(1402) in 16S rRNA + S-adenosyl-L-homocysteine + H(+). Functionally, specifically methylates the N4 position of cytidine in position 1402 (C1402) of 16S rRNA. The sequence is that of Ribosomal RNA small subunit methyltransferase H from Brachyspira hyodysenteriae (strain ATCC 49526 / WA1).